Here is a 274-residue protein sequence, read N- to C-terminus: Secreted RxLR effector protein 40 (274 aa).

An N-terminal signal peptide occupies residues 1 to 21; that stretch reads MRLYTQVVAASLVATLAIVDS. A RxLR-dEER motif is present at residues 35 to 53; the sequence is RFLRQDNATVARVSEDGER. N-linked (GlcNAc...) asparagine glycosylation is found at Asn-41, Asn-74, and Asn-258.

Belongs to the RxLR effector family.

It is found in the secreted. The protein localises to the host nucleus. It localises to the host cytoplasm. In terms of biological role, secreted effector that completely suppresses the host cell death induced by cell death-inducing proteins. The sequence is that of Secreted RxLR effector protein 40 from Plasmopara viticola (Downy mildew of grapevine).